Here is a 430-residue protein sequence, read N- to C-terminus: NEDD8-activating enzyme E1 catalytic subunit (430 aa).

52–76 contributes to the ATP binding site; sequence GLGCELLKNLALSGFRTIEVIDMDT. The active-site Glycyl thioester intermediate is cysteine 211.

Belongs to the ubiquitin-activating E1 family. UBA3 subfamily. Heterodimer of uba-3 and ula-1. Interacts with NEDD8 and ubc-12. In terms of tissue distribution, expressed in intestine, vulva epithelium and head and tail neurons.

The protein localises to the nucleus. Its subcellular location is the cytoplasm. The enzyme catalyses ATP + [NEDD8 protein] + [E1 NEDD8-activating enzyme]-L-cysteine = AMP + diphosphate + [E1 NEDD8-activating enzyme]-S-[NEDD8 protein]-yl-L-cysteine.. Its pathway is protein modification; protein neddylation. Functionally, catalytic subunit of the dimeric rfl-1 (uba-3)-ula-1 E1 enzyme. E1 activates NEDD8 by first adenylating its C-terminal glycine residue with ATP, thereafter linking this residue to the side chain of the catalytic cysteine, yielding a NEDD8-uba-3 thioester and free AMP. E1 finally transfers NEDD8 to the catalytic cysteine of ubc-12. Required for cytokinesis and mitotic spindle orientation during early embryogenesis. The polypeptide is NEDD8-activating enzyme E1 catalytic subunit (Caenorhabditis elegans).